The chain runs to 333 residues: Tryptophan--tRNA ligase (333 aa).

ATP is bound by residues 11–13 and 19–20; these read QPS and GN. Residues 12–20 carry the 'HIGH' region motif; it reads PSGELTIGN. Asp135 serves as a coordination point for L-tryptophan. ATP-binding positions include 147 to 149, Val186, and 195 to 199; these read GED and KMSKS. The 'KMSKS' region signature appears at 195 to 199; sequence KMSKS.

The protein belongs to the class-I aminoacyl-tRNA synthetase family. As to quaternary structure, homodimer.

It is found in the cytoplasm. The enzyme catalyses tRNA(Trp) + L-tryptophan + ATP = L-tryptophyl-tRNA(Trp) + AMP + diphosphate + H(+). Its function is as follows. Catalyzes the attachment of tryptophan to tRNA(Trp). The chain is Tryptophan--tRNA ligase from Pasteurella multocida (strain Pm70).